The following is a 498-amino-acid chain: Glycerol kinase (498 aa).

Thr12 contacts ADP. ATP contacts are provided by Thr12, Thr13, and Ser14. Thr12 contributes to the sn-glycerol 3-phosphate binding site. Residue Arg16 coordinates ADP. Residues Arg82, Glu83, and Tyr134 each coordinate sn-glycerol 3-phosphate. Glycerol-binding residues include Arg82, Glu83, and Tyr134. His230 is modified (phosphohistidine; by HPr). Sn-glycerol 3-phosphate is bound at residue Asp244. Positions 244 and 245 each coordinate glycerol. ADP-binding residues include Thr266 and Gly309. Residues Thr266, Gly309, Gln313, and Gly410 each contribute to the ATP site. Gly410 and Asn414 together coordinate ADP.

The protein belongs to the FGGY kinase family. In terms of assembly, homotetramer and homodimer (in equilibrium). Post-translationally, the phosphoenolpyruvate-dependent sugar phosphotransferase system (PTS), including enzyme I, and histidine-containing protein (HPr) are required for the phosphorylation, which leads to the activation of the enzyme.

The catalysed reaction is glycerol + ATP = sn-glycerol 3-phosphate + ADP + H(+). It functions in the pathway polyol metabolism; glycerol degradation via glycerol kinase pathway; sn-glycerol 3-phosphate from glycerol: step 1/1. Activated by phosphorylation and inhibited by fructose 1,6-bisphosphate (FBP). In terms of biological role, key enzyme in the regulation of glycerol uptake and metabolism. Catalyzes the phosphorylation of glycerol to yield sn-glycerol 3-phosphate. The sequence is that of Glycerol kinase from Staphylococcus aureus (strain MSSA476).